A 190-amino-acid chain; its full sequence is Recombination protein RecR (190 aa).

Residues 58-73 (CGQCGALSENELCEIC) form a C4-type zinc finger. In terms of domain architecture, Toprim spans 81–167 (NILCIVESPK…TFSKIAQGIP (87 aa)).

This sequence belongs to the RecR family.

Functionally, may play a role in DNA repair. It seems to be involved in an RecBC-independent recombinational process of DNA repair. It may act with RecF and RecO. This Campylobacter jejuni subsp. jejuni serotype O:6 (strain 81116 / NCTC 11828) protein is Recombination protein RecR.